The chain runs to 192 residues: GTP cyclohydrolase-2 (192 aa).

Arginine 50 to glutamate 54 provides a ligand contact to GTP. 3 residues coordinate Zn(2+): cysteine 55, cysteine 66, and cysteine 68. GTP is bound by residues glutamate 92 to arginine 94 and threonine 114. The active-site Proton acceptor is aspartate 126. Arginine 128 functions as the Nucleophile in the catalytic mechanism. Residues threonine 149 and lysine 154 each contribute to the GTP site.

It belongs to the GTP cyclohydrolase II family. Zn(2+) is required as a cofactor.

It carries out the reaction GTP + 4 H2O = 2,5-diamino-6-hydroxy-4-(5-phosphoribosylamino)-pyrimidine + formate + 2 phosphate + 3 H(+). It functions in the pathway cofactor biosynthesis; riboflavin biosynthesis; 5-amino-6-(D-ribitylamino)uracil from GTP: step 1/4. In terms of biological role, catalyzes the conversion of GTP to 2,5-diamino-6-ribosylamino-4(3H)-pyrimidinone 5'-phosphate (DARP), formate and pyrophosphate. The chain is GTP cyclohydrolase-2 from Helicobacter pylori (strain Shi470).